Consider the following 71-residue polypeptide: Biotinylated protein TB7.3 homolog (71 aa).

The Biotinyl-binding domain occupies 2–71 (AEDVRAEIVA…QAGHLIAVID (70 aa)). Lys37 bears the N6-biotinyllysine mark.

This is Biotinylated protein TB7.3 homolog from Mycolicibacterium smegmatis (strain ATCC 700084 / mc(2)155) (Mycobacterium smegmatis).